Consider the following 84-residue polypeptide: Small ribosomal subunit protein bS20 (84 aa).

The tract at residues 1-25 (MANIVSNEKTYRHTQKVRKENHAKM) is disordered.

Belongs to the bacterial ribosomal protein bS20 family.

Functionally, binds directly to 16S ribosomal RNA. The sequence is that of Small ribosomal subunit protein bS20 from Ureaplasma parvum serovar 3 (strain ATCC 700970).